The sequence spans 223 residues: Cytotoxic T-lymphocyte protein 4 (223 aa).

Positions 1-35 (MACSGFQSHGAWLELTSRTWPCTALFSLLFIPVFS) are cleaved as a signal peptide. At 38 to 161 (MHVAQPAVVL…IDPEPCPDSD (124 aa)) the chain is on the extracellular side. One can recognise an Ig-like V-type domain in the interval 39–140 (HVAQPAVVLA…VELLYPPPYY (102 aa)). The segment at 46–50 (VLANS) is homodimerization. 2 cysteine pairs are disulfide-bonded: Cys58/Cys129 and Cys85/Cys103. Residue Asn113 is glycosylated (N-linked (GlcNAc...) asparagine). The interval 134–139 (LYPPPY) is important for interaction with CD80 and CD86. Residue Asn145 is glycosylated (N-linked (GlcNAc...) asparagine). The interval 150 to 155 (YVIDPE) is homodimerization. The helical transmembrane segment at 162 to 182 (FLLWILAAVSSGLFFYSFLIT) threads the bilayer. Residues 183 to 223 (AVSLSKMLKKRSPLTTGVYVKMPPTEPECEKQFQPYFIPIN) lie on the Cytoplasmic side of the membrane. Tyr201 bears the Phosphotyrosine; by TXK and JAK2 mark.

In terms of assembly, homodimer; disulfide-linked. Binds to CD80/B7-1 and CD86/B7.2. Interacts with ICOSLG. In terms of processing, N-glycosylation is important for dimerization. Phosphorylation at Tyr-201 prevents binding to the AP-2 adapter complex, blocks endocytosis, and leads to retention of CTLA4 on the cell surface.

The protein localises to the cell membrane. Its function is as follows. Inhibitory receptor acting as a major negative regulator of T-cell responses. The affinity of CTLA4 for its natural B7 family ligands, CD80 and CD86, is considerably stronger than the affinity of their cognate stimulatory coreceptor CD28. The chain is Cytotoxic T-lymphocyte protein 4 (CTLA4) from Sus scrofa (Pig).